Reading from the N-terminus, the 623-residue chain is Translation initiation factor IF-2 (623 aa).

Positions 1-18 (MTLNKKTNNENSSKTTPK) are enriched in low complexity. Disordered stretches follow at residues 1–21 (MTLN…KLSK) and 92–115 (PQKE…KLQA). The region spanning 125–293 (KTPPIVTIMG…ILLFSEIQNL (169 aa)) is the tr-type G domain. Residues 134–141 (GHVDHGKT) are G1. GTP is bound at residue 134–141 (GHVDHGKT). Residues 159 to 163 (GITQH) are G2. The segment at 180-183 (DTPG) is G3. GTP is bound by residues 180 to 184 (DTPGH) and 234 to 237 (NKVD). Residues 234-237 (NKVD) are G4. Residues 270 to 272 (SAL) form a G5 region.

Belongs to the TRAFAC class translation factor GTPase superfamily. Classic translation factor GTPase family. IF-2 subfamily.

Its subcellular location is the cytoplasm. Functionally, one of the essential components for the initiation of protein synthesis. Protects formylmethionyl-tRNA from spontaneous hydrolysis and promotes its binding to the 30S ribosomal subunits. Also involved in the hydrolysis of GTP during the formation of the 70S ribosomal complex. The protein is Translation initiation factor IF-2 of Aster yellows witches'-broom phytoplasma (strain AYWB).